Reading from the N-terminus, the 795-residue chain is Phenylalanine--tRNA ligase beta subunit (795 aa).

The tRNA-binding domain occupies 39–148; sequence AAEFNGVVIG…LDAPLGTDLR (110 aa). Residues 401 to 476 form the B5 domain; it reads PKPAQILLRR…RIYGYNNIPN (76 aa). Mg(2+) is bound by residues D454, D460, E463, and E464. The FDX-ACB domain occupies 701-794; sequence SKFPANRRDI…LKTEFNASLR (94 aa).

This sequence belongs to the phenylalanyl-tRNA synthetase beta subunit family. Type 1 subfamily. As to quaternary structure, tetramer of two alpha and two beta subunits. It depends on Mg(2+) as a cofactor.

It is found in the cytoplasm. The enzyme catalyses tRNA(Phe) + L-phenylalanine + ATP = L-phenylalanyl-tRNA(Phe) + AMP + diphosphate + H(+). The protein is Phenylalanine--tRNA ligase beta subunit of Shewanella oneidensis (strain ATCC 700550 / JCM 31522 / CIP 106686 / LMG 19005 / NCIMB 14063 / MR-1).